Consider the following 366-residue polypeptide: Mitogen-activated protein kinase 13 (366 aa).

Residues 25–308 enclose the Protein kinase domain; that stretch reads YVSLTHIGSG…ASQALAHPFF (284 aa). 31–39 lines the ATP pocket; that stretch reads IGSGAYGSV. The residue at position 47 (Ser47) is a Phosphoserine. Lys54 is a binding site for ATP. The active-site Proton acceptor is Asp150. Thr180 carries the phosphothreonine; by MAP2K3, MAP2K4, MAP2K6 and MAP2K7 modification. Residues 180–182 carry the TXY motif; it reads TGY. Tyr182 bears the Phosphotyrosine; by MAP2K3, MAP2K4, MAP2K6 and MAP2K7 mark. Residue Ser350 is modified to Phosphoserine.

Belongs to the protein kinase superfamily. CMGC Ser/Thr protein kinase family. MAP kinase subfamily. In terms of assembly, interacts with MAPK8IP2. It depends on Mg(2+) as a cofactor. Post-translationally, dually phosphorylated on Thr-180 and Tyr-182 by MAP2K3/MKK3, MAP2K4/MKK4, MAP2K6/MKK6 and MAP2K7/MKK7, which activates the enzyme. Dephosphorylated by dual specificity phosphatase DUSP1.

The enzyme catalyses L-seryl-[protein] + ATP = O-phospho-L-seryl-[protein] + ADP + H(+). It catalyses the reaction L-threonyl-[protein] + ATP = O-phospho-L-threonyl-[protein] + ADP + H(+). Activated by phosphorylation on threonine and tyrosine by dual specificity kinases, MAP2K3/MKK3 MAP2K6/MKK6, MAP2K4/MKK4 and MAP2K7/MKK7. Activation by ultraviolet radiation, hyperosmotic shock, anisomycin or by TNF-alpha is mediated by MAP2K3/MKK3. Inhibited by dual specificity phosphatase DUSP1. Serine/threonine kinase which acts as an essential component of the MAP kinase signal transduction pathway. MAPK13 is one of the four p38 MAPKs which play an important role in the cascades of cellular responses evoked by extracellular stimuli such as pro-inflammatory cytokines or physical stress leading to direct activation of transcription factors such as ELK1 and ATF2. Accordingly, p38 MAPKs phosphorylate a broad range of proteins and it has been estimated that they may have approximately 200 to 300 substrates each. MAPK13 is one of the less studied p38 MAPK isoforms. Some of the targets are downstream kinases such as MAPKAPK2, which are activated through phosphorylation and further phosphorylate additional targets. Plays a role in the regulation of protein translation by phosphorylating and inactivating EEF2K. Involved in cytoskeletal remodeling through phosphorylation of MAPT and STMN1. Mediates UV irradiation induced up-regulation of the gene expression of CXCL14. Plays an important role in the regulation of epidermal keratinocyte differentiation, apoptosis and skin tumor development. Phosphorylates the transcriptional activator MYB in response to stress which leads to rapid MYB degradation via a proteasome-dependent pathway. MAPK13 also phosphorylates and down-regulates PRKD1 during regulation of insulin secretion in pancreatic beta cells. This is Mitogen-activated protein kinase 13 (MAPK13) from Bos taurus (Bovine).